The chain runs to 216 residues: CsgBAC operon transcriptional regulatory protein (216 aa).

The HTH luxR-type domain occupies 149-214 (NSTESALLTH…QAVSWANDNL (66 aa)). The H-T-H motif DNA-binding region spans 173 to 192 (NNEIARSLFISENTVKTHLY).

It localises to the cell inner membrane. Functionally, the master regulator for adhesive curli fimbriae expression; necessary for transcription of the csgBAC/ymdA operon. Plays a positive role in biofilm formation. May have the capability to respond to starvation and/or high cell density by activating csgBA transcription. Low-level constitutive expression confers an adherent curli fimbriae-expressing phenotype, up-regulates 10 genes and down-regulates 14 others. This Escherichia coli (strain K12) protein is CsgBAC operon transcriptional regulatory protein (csgD).